Consider the following 5900-residue polypeptide: Midasin (5900 aa).

The disordered stretch occupies residues 250 to 270 (GSSVKSKKGGEQQQEGEGEDE). AAA-ATPase protomer regions lie at residues 278–583 (TNTV…LRKQ), 673–1012 (EKIS…ALNY), 1101–1346 (PIIP…IAGY), 1411–1721 (IVWT…MDKQ), 1840–2089 (RGMQ…HVLT), and 2167–2451 (LENI…EIYM). ATP is bound by residues 302-309 (GVTGSGKT) and 689-696 (GETGTGKT). The disordered stretch occupies residues 796–826 (QTTTNNTKENNNNNNNNNNNNNNNNNNKKRT). A compositionally biased stretch (low complexity) spans 797-821 (TTTNNTKENNNNNNNNNNNNNNNNN). ATP-binding positions include 1135-1142 (GPTSSGKT), 1438-1445 (GETGCSKT), 1852-1859 (GSPGVGKT), and 2184-2191 (GPTSTSKT). The linker stretch occupies residues 2562-4965 (ESAIKSILCE…EGKGKKDVSD (2404 aa)). Positions 4932–5598 (GDDGEGGEGG…SVEEKKLTRE (667 aa)) are disordered. Acidic residues predominate over residues 4984 to 5008 (KDEDEDEEKEEKDEDEGFDMQDDFE). The segment covering 5009–5055 (GEMHDIKKDENKDEDKKDDPNNEKENDKEMGDLEKPEDNVVDEKLWD) has biased composition (basic and acidic residues). Over residues 5056–5076 (EQDVQDEEEQDEEGKGDETNS) the composition is skewed to acidic residues. A compositionally biased stretch (basic and acidic residues) spans 5079 to 5113 (MMAKQDGKDDNDDDKKDDDKKDDKKKKKEENGKPD). Composition is skewed to acidic residues over residues 5114 to 5130 (ENEE…EDGK) and 5139 to 5156 (GASD…DDVI). A compositionally biased stretch (basic and acidic residues) spans 5159 to 5173 (EQEKEENHGDPRGDD). Residues 5174–5199 (QMEIPEDLELEDPDEGKEDDEQQDGG) are compositionally biased toward acidic residues. The segment covering 5213 to 5224 (DVSKEEEKKKEL) has biased composition (basic and acidic residues). Acidic residues-rich tracts occupy residues 5225-5255 (DGDE…EDKE) and 5273-5286 (EGDE…EEDQ). A compositionally biased stretch (basic and acidic residues) spans 5297-5313 (ETPKDSEQPLGVKDKTG). Residues 5339-5349 (GMTQPTPSEND) are compositionally biased toward polar residues. A compositionally biased stretch (basic and acidic residues) spans 5410 to 5442 (SEPKEKAPKQDPNAKENENQDYEFIKDDEKLDK). Positions 5448-5460 (QALAAATDTQLQD) are enriched in low complexity. A compositionally biased stretch (acidic residues) spans 5469–5487 (DQAEQEEDQMDIDEEDDMD). 2 stretches are compositionally biased toward basic and acidic residues: residues 5488-5536 (VDHK…KDQQ) and 5551-5570 (QFTK…KAVL). The segment covering 5571 to 5590 (DDGDDQEMEQDGDQDDEESV) has biased composition (acidic residues). The VWFA domain occupies 5696–5889 (QVLLAIDDTE…NIPSILSDTL (194 aa)).

This sequence belongs to the midasin family. In terms of assembly, associates with pre-60S ribosomes in the nucleoplasm.

The protein resides in the nucleus. It is found in the nucleolus. The protein localises to the nucleoplasm. In terms of biological role, nuclear chaperone required for maturation and nuclear export of pre-60S ribosome subunits. Functions at successive maturation steps to remove ribosomal factors at critical transition points, first driving the exit of early pre-60S particles from the nucleolus and then driving late pre-60S particles from the nucleus. The sequence is that of Midasin (mdn1) from Dictyostelium discoideum (Social amoeba).